A 141-amino-acid polypeptide reads, in one-letter code: Large ribosomal subunit protein uL11 (141 aa).

It belongs to the universal ribosomal protein uL11 family. In terms of assembly, part of the ribosomal stalk of the 50S ribosomal subunit. Interacts with L10 and the large rRNA to form the base of the stalk. L10 forms an elongated spine to which L12 dimers bind in a sequential fashion forming a multimeric L10(L12)X complex. Post-translationally, one or more lysine residues are methylated.

Functionally, forms part of the ribosomal stalk which helps the ribosome interact with GTP-bound translation factors. The protein is Large ribosomal subunit protein uL11 of Pediococcus pentosaceus (strain ATCC 25745 / CCUG 21536 / LMG 10740 / 183-1w).